Reading from the N-terminus, the 362-residue chain is Aminomethyltransferase (362 aa).

This sequence belongs to the GcvT family. As to quaternary structure, the glycine cleavage system is composed of four proteins: P, T, L and H.

It carries out the reaction N(6)-[(R)-S(8)-aminomethyldihydrolipoyl]-L-lysyl-[protein] + (6S)-5,6,7,8-tetrahydrofolate = N(6)-[(R)-dihydrolipoyl]-L-lysyl-[protein] + (6R)-5,10-methylene-5,6,7,8-tetrahydrofolate + NH4(+). Its function is as follows. The glycine cleavage system catalyzes the degradation of glycine. The chain is Aminomethyltransferase from Chromobacterium violaceum (strain ATCC 12472 / DSM 30191 / JCM 1249 / CCUG 213 / NBRC 12614 / NCIMB 9131 / NCTC 9757 / MK).